A 397-amino-acid chain; its full sequence is NADH-quinone oxidoreductase subunit H (397 aa).

9 helical membrane passes run 7–27, 78–98, 120–140, 164–184, 195–215, 247–267, 283–303, 322–342, and 353–373; these read ALLI…TAFA, LVYT…FGGI, ILAL…GGWA, MGLS…LDIV, WLIL…FAEV, MAEY…FFGG, SWPL…FIWV, LTLP…AFVP, and WLLG…SDAV.

It belongs to the complex I subunit 1 family. In terms of assembly, NDH-1 is composed of 15 different subunits. Subunits NuoA, H, J, K, L, M, N constitute the membrane sector of the complex.

It localises to the cell membrane. The enzyme catalyses a quinone + NADH + 5 H(+)(in) = a quinol + NAD(+) + 4 H(+)(out). Its function is as follows. NDH-1 shuttles electrons from NADH, via FMN and iron-sulfur (Fe-S) centers, to quinones in the respiratory chain. The immediate electron acceptor for the enzyme in this species is believed to be ubiquinone. Couples the redox reaction to proton translocation (for every two electrons transferred, four hydrogen ions are translocated across the cytoplasmic membrane), and thus conserves the redox energy in a proton gradient. This subunit may bind ubiquinone. This is NADH-quinone oxidoreductase subunit H from Deinococcus radiodurans (strain ATCC 13939 / DSM 20539 / JCM 16871 / CCUG 27074 / LMG 4051 / NBRC 15346 / NCIMB 9279 / VKM B-1422 / R1).